The following is a 419-amino-acid chain: Transcription termination factor Rho (419 aa).

Residues 48 to 123 form the Rho RNA-BD domain; sequence EISGDGVLEI…LKVDSINFDR (76 aa). 3 RNA-binding regions span residues 61 to 66, 78 to 80, and 108 to 110; these read GFGFLR, DIY, and ERY. Residues 169-174, 181-186, and R212 each bind ATP; these read GKGQRG and KAGKTI. The interval 284-288 is RNA-binding 2; it reads VLTGG.

Belongs to the Rho family. In terms of assembly, homohexamer. The homohexamer assembles into an open ring structure.

Functionally, facilitates transcription termination by a mechanism that involves Rho binding to the nascent RNA, activation of Rho's RNA-dependent ATPase activity, and release of the mRNA from the DNA template. This chain is Transcription termination factor Rho, found in Pseudomonas aeruginosa (strain ATCC 15692 / DSM 22644 / CIP 104116 / JCM 14847 / LMG 12228 / 1C / PRS 101 / PAO1).